A 522-amino-acid polypeptide reads, in one-letter code: Zinc finger protein STOP1 homolog (522 aa).

2 stretches are compositionally biased toward polar residues: residues 1–12 (MDSGLGRSSETS) and 19–40 (MASNATRNTDPDQQGVRFSSMD). Disordered regions lie at residues 1 to 43 (MDSG…DQPP) and 234 to 260 (CGGEGSEPIPMEDHDVKESDDGGEREN). Over residues 244-260 (MEDHDVKESDDGGEREN) the composition is skewed to basic and acidic residues. Residues 282–304 (HFCLICGKGFKRDANLRMHMRGH) form a C2H2-type 1 zinc finger. Residues 390–421 (KHCGRDKWLCSCGTTFSRKDKLFGHVALFQGH) form a C2H2-type 2; atypical zinc finger.

It localises to the nucleus. Functionally, probable transcription factor that may be involved in aluminum tolerance. The polypeptide is Zinc finger protein STOP1 homolog (Oryza sativa subsp. japonica (Rice)).